The following is a 214-amino-acid chain: MANRIDHEYDYLFKIVLIGDSGVGKSNILSRFTRNEFCLESKSTIGVEFATRTLQVEGKTVKAQIWDTAGQERYRAITSAYYRGAVGALLVYDITKRQTFENVLRWLRELRDHADSNIVIMMAGNKSDLNHLRSVADEDGRSLAEKEGLSFLETSALEATNIEKAFQTILSEIYHIISKKALAAQEAAGNLPGQGTAINISDSSATNRKGCCST.

19 to 26 (GDSGVGKS) provides a ligand contact to GTP. The short motif at 41 to 49 (SKSTIGVEF) is the Effector region element. GTP-binding positions include 67 to 71 (DTAGQ), 125 to 128 (NKSD), and 155 to 156 (SA). 2 S-geranylgeranyl cysteine lipidation sites follow: Cys211 and Cys212.

This sequence belongs to the small GTPase superfamily. Rab family. Expressed in root tips.

It is found in the endosome membrane. The protein resides in the golgi apparatus. The protein localises to the trans-Golgi network membrane. In terms of biological role, intracellular vesicle trafficking and protein transport. In Arabidopsis thaliana (Mouse-ear cress), this protein is Ras-related protein RABA2b (RABA2B).